A 211-amino-acid polypeptide reads, in one-letter code: Cytidylate kinase (211 aa).

Residue 9-17 (GPAAAGKGT) coordinates ATP.

The protein belongs to the cytidylate kinase family. Type 1 subfamily.

It is found in the cytoplasm. The enzyme catalyses CMP + ATP = CDP + ADP. The catalysed reaction is dCMP + ATP = dCDP + ADP. This chain is Cytidylate kinase, found in Paramagnetospirillum magneticum (strain ATCC 700264 / AMB-1) (Magnetospirillum magneticum).